The sequence spans 142 residues: Interleukin-3 (142 aa).

An N-terminal signal peptide occupies residues 1 to 18 (MSHLPILLLLLLVSPGLQ). Residues N33, N88, and N108 are each glycosylated (N-linked (GlcNAc...) asparagine). The cysteines at positions 34 and 102 are disulfide-linked.

Belongs to the IL-3 family. Monomer. In terms of tissue distribution, activated T-cells, mast cells, natural killer cells.

It localises to the secreted. In terms of biological role, granulocyte/macrophage colony-stimulating factors are cytokines that act in hematopoiesis by controlling the production, differentiation, and function of 2 related white cell populations of the blood, the granulocytes and the monocytes-macrophages. Functionally, this CSF induces granulocytes, macrophages, mast cells, stem cells, erythroid cells, eosinophils and megakaryocytes. The polypeptide is Interleukin-3 (IL3) (Saguinus oedipus (Cotton-top tamarin)).